We begin with the raw amino-acid sequence, 293 residues long: Acetylglutamate kinase (293 aa).

Substrate-binding positions include 65–66 (GG), Arg87, and Asn180.

This sequence belongs to the acetylglutamate kinase family. ArgB subfamily.

Its subcellular location is the cytoplasm. The enzyme catalyses N-acetyl-L-glutamate + ATP = N-acetyl-L-glutamyl 5-phosphate + ADP. Its pathway is amino-acid biosynthesis; L-arginine biosynthesis; N(2)-acetyl-L-ornithine from L-glutamate: step 2/4. Functionally, catalyzes the ATP-dependent phosphorylation of N-acetyl-L-glutamate. The protein is Acetylglutamate kinase of Cereibacter sphaeroides (strain ATCC 17029 / ATH 2.4.9) (Rhodobacter sphaeroides).